The sequence spans 1490 residues: WD repeat-containing protein 7 (1490 aa).

7 WD repeats span residues 17-56, 62-104, 156-199, 324-366, 404-443, 462-507, and 558-597; these read APTH…QINP, GHTA…CIEF, ISPD…SDMQ, LICP…DKQG, NEPL…IVQL, GHRN…MKHI, and RHLF…LDRC. 2 disordered regions span residues 761-783 and 911-945; these read DEEE…YRSS and GDHM…IVQG. A compositionally biased stretch (basic and acidic residues) spans 768-782; that stretch reads IMRQRREESDPEYRS. Ser935 carries the post-translational modification Phosphoserine. A compositionally biased stretch (polar residues) spans 936–945; sequence PPTSSNIVQG. WD repeat units lie at residues 1351-1390 and 1392-1432; these read PAIC…CQTI and GHKG…LGSI. The residue at position 1456 (Ser1456) is a Phosphoserine.

The polypeptide is WD repeat-containing protein 7 (WDR7) (Homo sapiens (Human)).